Consider the following 499-residue polypeptide: MKKIILTIIDGLGLRKERQGNAYLQAKHPCFDYLFSMCPNSVLQASGQYVGLPEGQIGNSEVGHLNIGAGRVVYTGLSLINKAIENNTFKDNEILNDVIDKTIKNNTTLHVMGLLSNGGVHSLDLHLFEILKLAHSKGLKNVSVHVFGDGRDVKPQSIKNSLETLKDLCQKFGYKISSISGRFYAMDRDSIFSRNQEAYDAILGQSKNVIENIDDYIESQYKKGIFDEFFEPAQLKDGVFVKNGDSIIFFNFRPDRARQLSHMFIGSNLYTYKPKNQVQIDNFVSLMKYEGINSKIAFKEMEVVNPLGKVLESNDIKQLRLAETQKYAHVTFFFDGGVDIEYKNENRILVDSLKVDSFADYPHMSAKEITDSLLNNIEKNDFIIMNYANPDMVGHTGNLNATIEAIEFLDSQFQRILEYVSLNHENVTWFITADHGNAEITEDENNKPATKHTTSPVMFICTDKNVNLGNGSLCDVAPTILDYLKINKPKEMTGKSLLK.

Asp-10 and Ser-60 together coordinate Mn(2+). Ser-60 functions as the Phosphoserine intermediate in the catalytic mechanism. Substrate contacts are provided by residues His-121, 151-152 (RD), Arg-182, Arg-188, 253-256 (RPDR), and Lys-326. Mn(2+)-binding residues include Asp-391, His-395, Asp-434, His-435, and His-452.

This sequence belongs to the BPG-independent phosphoglycerate mutase family. In terms of assembly, monomer. It depends on Mn(2+) as a cofactor.

The enzyme catalyses (2R)-2-phosphoglycerate = (2R)-3-phosphoglycerate. Its pathway is carbohydrate degradation; glycolysis; pyruvate from D-glyceraldehyde 3-phosphate: step 3/5. Functionally, catalyzes the interconversion of 2-phosphoglycerate and 3-phosphoglycerate. In Metamycoplasma hominis (strain ATCC 23114 / DSM 25592 / NBRC 14850 / NCTC 10111 / PG21) (Mycoplasma hominis), this protein is 2,3-bisphosphoglycerate-independent phosphoglycerate mutase.